The chain runs to 143 residues: Transcriptional regulator MraZ (143 aa).

SpoVT-AbrB domains lie at 5 to 47 and 76 to 119; these read TYTP…PREE and ADEQ…DAAA.

Belongs to the MraZ family. As to quaternary structure, forms oligomers.

The protein localises to the cytoplasm. The protein resides in the nucleoid. This is Transcriptional regulator MraZ from Corynebacterium diphtheriae (strain ATCC 700971 / NCTC 13129 / Biotype gravis).